The following is an 895-amino-acid chain: MSAVPEQILGASSANDADPQETHEWLDALQGVLAAEGPARAAFLIDKQIEYARVNGVTQPFHAETQYINTIPVEQQARIPGDQDIEHRIRSYTRWNAMAMVLRANKHTNVGGHISSFASAATLYDVGYNHFWRAPSEAGGGDLVFVQGHSAPGVYSRAFLLGRLTQDQLDNFRQEVDGKGISSYPHPWLMPDFWQFPTVSMGLGPIMAIYQARFMKYLDSRGLAKAGDRKVWAFLGDGETDEPESLGAIGMAGREKLDNLVFVINCNLQRLDGPVRGNGKIIQELESEFRGAGWNVIKVVWGSKWDSLLARDTKGLLMKRMMECVDGEYQTMKAKDGAYVREHFFNTPELKAMVADWSDDDIWRLNRGGHDPHKIYAAYKAASEHKGQPTLILAKTIKGYGMGDAGQAMNVAHQQKKMPVDAIRKFRDQFNLPVADDQLEEVPYITFPEGSKELEYMRQARQNLGGYLPARRQKAEALPVPQLSAFDALLKATGEGREVSTTMAFVRILNTLLKDKQIGKHVVPIVPDESRTFGMEGLFRQVGIWNQEGQKYVPEDHDQLMFYKESQTGQVLQEGINEAGAMCDWIAAATSYSTHGVQMIPFYIYYSMFGIQRIGDLCWAAADMRSRGFLLGGTAGRTTLNGEGLQHEDGHSHVFHAAIPNCISYDPTFQYELAVVMQDGLRRMYAEQEDVYYYLTVMNENYEHPEMPAGVEQDIVKGMYQFRKGVENSNAPRVQLLGSGTIFREVIAAADLLKKDWGVESDLWGCPSFTELAREGHDVERFNLLHPTETPRESHVAKSLKSARGPVIASTDYVRAFAEQIRPFVPRRYVVLGTDGFGRSDTREKLRHFFEVDRYWVTLAALKALADEGAIGRDKVAEAIKKYNLDPNKPNPMSV.

Residues 1–20 (MSAVPEQILGASSANDADPQ) are disordered.

As to quaternary structure, homodimer. Part of the PDH complex, consisting of multiple copies of pyruvate dehydrogenase (E1), dihydrolipoamide acetyltransferase (E2) and lipoamide dehydrogenase (E3). It depends on thiamine diphosphate as a cofactor.

The catalysed reaction is N(6)-[(R)-lipoyl]-L-lysyl-[protein] + pyruvate + H(+) = N(6)-[(R)-S(8)-acetyldihydrolipoyl]-L-lysyl-[protein] + CO2. Functionally, component of the pyruvate dehydrogenase (PDH) complex, that catalyzes the overall conversion of pyruvate to acetyl-CoA and CO(2). The sequence is that of Pyruvate dehydrogenase E1 component (pdhA) from Cupriavidus necator (strain ATCC 17699 / DSM 428 / KCTC 22496 / NCIMB 10442 / H16 / Stanier 337) (Ralstonia eutropha).